The following is a 318-amino-acid chain: Methionyl-tRNA formyltransferase (318 aa).

A (6S)-5,6,7,8-tetrahydrofolate-binding site is contributed by 110–113; the sequence is SLLP.

It belongs to the Fmt family.

The catalysed reaction is L-methionyl-tRNA(fMet) + (6R)-10-formyltetrahydrofolate = N-formyl-L-methionyl-tRNA(fMet) + (6S)-5,6,7,8-tetrahydrofolate + H(+). In terms of biological role, attaches a formyl group to the free amino group of methionyl-tRNA(fMet). The formyl group appears to play a dual role in the initiator identity of N-formylmethionyl-tRNA by promoting its recognition by IF2 and preventing the misappropriation of this tRNA by the elongation apparatus. The chain is Methionyl-tRNA formyltransferase from Ligilactobacillus salivarius (strain UCC118) (Lactobacillus salivarius).